Consider the following 185-residue polypeptide: MINEIKNDAKSRMEKCVESTKTQMAKVRTGRAHPSLLDTIKVSYYGSMTPLKQVGNVSIEDSRTLAVNVFDSTMIQAVEKAIMSSDLGLNPMSAGATIRIPLPALTEERRKDLIKVVRAEAENGRIAVRNVRRDANSDVKSLEKEKECTEDDVRRTEDDVQKFTDAHIKLIDEILTAKEAELMEV.

The protein belongs to the RRF family.

It localises to the cytoplasm. Its function is as follows. Responsible for the release of ribosomes from messenger RNA at the termination of protein biosynthesis. May increase the efficiency of translation by recycling ribosomes from one round of translation to another. In Shewanella sediminis (strain HAW-EB3), this protein is Ribosome-recycling factor.